Consider the following 224-residue polypeptide: Proteasome subunit beta (224 aa).

Residues methionine 1–glycine 6 constitute a propeptide, removed in mature form; by autocatalysis. Threonine 7 serves as the catalytic Nucleophile.

This sequence belongs to the peptidase T1B family. In terms of assembly, the 20S proteasome core is composed of 14 alpha and 14 beta subunits that assemble into four stacked heptameric rings, resulting in a barrel-shaped structure. The two inner rings, each composed of seven catalytic beta subunits, are sandwiched by two outer rings, each composed of seven alpha subunits. The catalytic chamber with the active sites is on the inside of the barrel. Has a gated structure, the ends of the cylinder being occluded by the N-termini of the alpha-subunits. Is capped at one or both ends by the proteasome regulatory ATPase, PAN.

Its subcellular location is the cytoplasm. The enzyme catalyses Cleavage of peptide bonds with very broad specificity.. With respect to regulation, the formation of the proteasomal ATPase PAN-20S proteasome complex, via the docking of the C-termini of PAN into the intersubunit pockets in the alpha-rings, triggers opening of the gate for substrate entry. Interconversion between the open-gate and close-gate conformations leads to a dynamic regulation of the 20S proteasome proteolysis activity. Functionally, component of the proteasome core, a large protease complex with broad specificity involved in protein degradation. In Methanocaldococcus sp. (strain FS406-22), this protein is Proteasome subunit beta.